Consider the following 416-residue polypeptide: MSATIEREFEELDAQCRWQPLYLEIRNESHDYPHRVAKFPENRNRNRYRDVSPYDHSRVKLQSAENDYINASLVDIEEAQRSYILTQGPLPNTCCHFWLMVWQQKTRAVVMLNRTVEKESVKCAQYWPTDDREMVFKETGFSVKLLSEDVKSYYTVHLLQLENINSGETRTISHFHYTTWPDFGVPESPASFLNFLFKVRESGSLNPDHGPAVIHCSAGIGRSGTFSLVDTCLVLMEKGEDVNVKQILLSMRKYRMGLIQTPDQLRFSYMAIIEGAKYTKGDSNIQKRWKELSKEDLSPVCRHSQNRTMTEKYNGKRIGSEDEKLTGLSSKVPDTVEESSESILRKRIREDRKATTAQKVQQMRQRLNETERKRKRWLYWQPILTKMGFVSVILVGALVGWTLLFQLNVLPRLTDT.

A Tyrosine-protein phosphatase domain is found at I5–G275. Phosphotyrosine is present on Y22. S52 bears the Phosphoserine mark. The residue at position 68 (Y68) is a Phosphotyrosine. Substrate contacts are provided by residues D182, C216–R222, and Q260. C216 acts as the Phosphocysteine intermediate in catalysis. C216 carries the S-nitrosocysteine modification. 5 positions are modified to phosphoserine: S293, S298, S304, S320, and S339. Residues E341–L410 form an endoplasmic reticulum location region. The may mediate interaction with STX17 stretch occupies residues E371–L410.

The protein belongs to the protein-tyrosine phosphatase family. Non-receptor class 1 subfamily. In terms of assembly, interacts with RMDN3. Interacts with TMED9. Interacts with STX17; dephosphorylates STX17. Interacts with ITGA1 (via cytoplasmic domain); activates the phosphatase activity towards EGFR. Interacts with TRAF2; probably involved in tumor necrosis factor-mediated signaling. Interacts with MET. Interacts with FAM220A and STAT3; interaction with FAM220A promotes interaction of PTPN2 with transcriptional activator STAT3, leading to dephosphorylation of STAT3 by PTPN2 and negative regulation of STAT3 transcriptional activator activity. Specifically phosphorylated in a cell cycle-dependent manner by cyclin-dependent kinases CDK1 and CDK2. Probably activated through phosphorylation by PKR. As to expression, does not show tissue- or cell-type specificity although levels of transcription show variability. Macrophages showed higher levels of expression than lymphocytes.

The protein resides in the cytoplasm. The protein localises to the endoplasmic reticulum-Golgi intermediate compartment. Its subcellular location is the endoplasmic reticulum. It localises to the nucleus membrane. It is found in the nucleus. The protein resides in the cell membrane. It catalyses the reaction O-phospho-L-tyrosyl-[protein] + H2O = L-tyrosyl-[protein] + phosphate. Its function is as follows. Non-receptor type tyrosine-specific phosphatase that dephosphorylates receptor protein tyrosine kinases including INSR, EGFR, CSF1R, PDGFR. Also dephosphorylates non-receptor protein tyrosine kinases like JAK1, JAK2, JAK3, Src family kinases, STAT1, STAT3 and STAT6 either in the nucleus or the cytoplasm. Negatively regulates numerous signaling pathways and biological processes like hematopoiesis, inflammatory response, cell proliferation and differentiation, and glucose homeostasis. Plays a multifaceted and important role in the development of the immune system. Functions in T-cell receptor signaling through dephosphorylation of FYN and LCK to control T-cells differentiation and activation. Dephosphorylates CSF1R, negatively regulating its downstream signaling and macrophage differentiation. Negatively regulates cytokine (IL2/interleukin-2 and interferon)-mediated signaling through dephosphorylation of the cytoplasmic kinases JAK1, JAK3 and their substrate STAT1, that propagate signaling downstream of the cytokine receptors. Also regulates the IL6/interleukin-6 and IL4/interleukin-4 cytokine signaling through dephosphorylation of STAT3 and STAT6 respectively. In addition to the immune system, it is involved in anchorage-dependent, negative regulation of EGF-stimulated cell growth. Activated by the integrin ITGA1/ITGB1, it dephosphorylates EGFR and negatively regulates EGF signaling. Dephosphorylates PDGFRB and negatively regulates platelet-derived growth factor receptor-beta signaling pathway and therefore cell proliferation. Negatively regulates tumor necrosis factor-mediated signaling downstream via MAPK through SRC dephosphorylation. May also regulate the hepatocyte growth factor receptor signaling pathway through dephosphorylation of the hepatocyte growth factor receptor MET. Also plays an important role in glucose homeostasis. For instance, negatively regulates the insulin receptor signaling pathway through the dephosphorylation of INSR and control gluconeogenesis and liver glucose production through negative regulation of the IL6 signaling pathways. May also bind DNA. The polypeptide is Tyrosine-protein phosphatase non-receptor type 2 (Ptpn2) (Rattus norvegicus (Rat)).